Reading from the N-terminus, the 768-residue chain is Translation initiation factor IF-2, chloroplastic (768 aa).

Disordered stretches follow at residues 1-20 (MFLN…SNIN), 54-77 (KSES…DKKS), and 155-176 (KKVA…PPES). Basic and acidic residues predominate over residues 54-65 (KSESHTGGEQHL). A compositionally biased stretch (polar residues) spans 160–176 (TPSQNSASIQSNSPPES). The region spanning 261–434 (KRPPIVTVMG…TLLAELEDLK (174 aa)) is the tr-type G domain. Residues 270-277 (GHVDHGKT), 320-324 (DTPGH), and 374-377 (SKID) each bind GTP.

This sequence belongs to the TRAFAC class translation factor GTPase superfamily. Classic translation factor GTPase family. IF-2 subfamily.

The protein resides in the plastid. It localises to the chloroplast. One of the essential components for the initiation of protein synthesis. Protects formylmethionyl-tRNA from spontaneous hydrolysis and promotes its binding to the 30S ribosomal subunits. Also involved in the hydrolysis of GTP during the formation of the 70S ribosomal complex. The sequence is that of Translation initiation factor IF-2, chloroplastic (infB) from Pyropia yezoensis (Susabi-nori).